The chain runs to 802 residues: DSC E3 ubiquitin ligase complex subunit A (802 aa).

Positions Met1–Ser22 are cleaved as a signal peptide. Residues Arg23–Lys381 lie on the Lumenal side of the membrane. 6 N-linked (GlcNAc...) asparagine glycosylation sites follow: Asn48, Asn71, Asn115, Asn126, Asn148, and Asn166. Residues Tyr382–Leu402 form a helical membrane-spanning segment. Topologically, residues Arg403–Asp429 are cytoplasmic. The helical transmembrane segment at Ala430 to Ala450 threads the bilayer. Residues Thr451–Ala453 lie on the Lumenal side of the membrane. Residues Phe454–Val474 traverse the membrane as a helical segment. Topologically, residues Gln475–Met550 are cytoplasmic. Positions Glu478–Gln541 are disordered. Positions Thr532–Gln541 are enriched in polar residues. The chain crosses the membrane as a helical span at residues Tyr551–Trp571. Topologically, residues Pro572–Arg574 are lumenal. The helical transmembrane segment at Leu575 to Ile595 threads the bilayer. Topologically, residues Gly596 to Arg608 are cytoplasmic. A helical membrane pass occupies residues Trp609–Val629. Residues Arg630–Thr642 lie on the Lumenal side of the membrane. A helical transmembrane segment spans residues Ala643–Leu663. The Cytoplasmic segment spans residues Gly664–Val802. The RING-type; atypical zinc finger occupies Cys732–Arg796.

Component of the DSC E3 ubiquitin ligase complex composed of dscA, dscB, dscC and dscD.

It is found in the endoplasmic reticulum membrane. The catalysed reaction is S-ubiquitinyl-[E2 ubiquitin-conjugating enzyme]-L-cysteine + [acceptor protein]-L-lysine = [E2 ubiquitin-conjugating enzyme]-L-cysteine + N(6)-ubiquitinyl-[acceptor protein]-L-lysine.. It functions in the pathway protein modification; protein ubiquitination. Functionally, catalytic component of the DSC E3 ubiquitin ligase complex which is required for the srbA transcriptional activator proteolytic cleavage to release the soluble transcription factor from the membrane in low oxygen or sterol conditions. Required for growth during hypoxia and triazole drug susceptibility, as well as for virulence in a murine model of invasive pulmonary aspergillosis (IPA). This chain is DSC E3 ubiquitin ligase complex subunit A, found in Aspergillus fumigatus (strain CBS 144.89 / FGSC A1163 / CEA10) (Neosartorya fumigata).